The chain runs to 184 residues: Gastrokine-2 (184 aa).

Positions 1-20 (MKSLVAFLVVLSILRIQSQA) are cleaved as a signal peptide. A BRICHOS domain is found at 54-151 (HSGSCSSTTI…LCKHIPLYEG (98 aa)). A disulfide bridge links Cys81 with Cys143.

As to quaternary structure, heterodimer with TFF1; disulfide linked. Interacts with TFF2.

The protein resides in the secreted. The protein is Gastrokine-2 (Gkn2) of Rattus norvegicus (Rat).